Reading from the N-terminus, the 96-residue chain is CRISPR-associated endoribonuclease Cas2 1 (96 aa).

Residue Asp8 coordinates Mg(2+).

The protein belongs to the CRISPR-associated endoribonuclease Cas2 protein family. Homodimer, forms a heterotetramer with a Cas1 homodimer. It depends on Mg(2+) as a cofactor.

CRISPR (clustered regularly interspaced short palindromic repeat), is an adaptive immune system that provides protection against mobile genetic elements (viruses, transposable elements and conjugative plasmids). CRISPR clusters contain sequences complementary to antecedent mobile elements and target invading nucleic acids. CRISPR clusters are transcribed and processed into CRISPR RNA (crRNA). Functions as a ssRNA-specific endoribonuclease. Involved in the integration of spacer DNA into the CRISPR cassette. The sequence is that of CRISPR-associated endoribonuclease Cas2 1 from Moorella thermoacetica (strain ATCC 39073 / JCM 9320).